The primary structure comprises 61 residues: Photosystem II reaction center protein K (61 aa).

The propeptide occupies 1-24 (MLNIFSLISICLNSALYSSSFFFG). The helical transmembrane segment at 40–60 (MPVIPVFFFLLAFVWQAAVSF) threads the bilayer.

The protein belongs to the PsbK family. As to quaternary structure, PSII is composed of 1 copy each of membrane proteins PsbA, PsbB, PsbC, PsbD, PsbE, PsbF, PsbH, PsbI, PsbJ, PsbK, PsbL, PsbM, PsbT, PsbX, PsbY, PsbZ, Psb30/Ycf12, at least 3 peripheral proteins of the oxygen-evolving complex and a large number of cofactors. It forms dimeric complexes.

The protein resides in the plastid. The protein localises to the chloroplast thylakoid membrane. Its function is as follows. One of the components of the core complex of photosystem II (PSII). PSII is a light-driven water:plastoquinone oxidoreductase that uses light energy to abstract electrons from H(2)O, generating O(2) and a proton gradient subsequently used for ATP formation. It consists of a core antenna complex that captures photons, and an electron transfer chain that converts photonic excitation into a charge separation. The chain is Photosystem II reaction center protein K from Jasminum nudiflorum (Winter jasmine).